The sequence spans 181 residues: Probable toxin TacT (181 aa).

This sequence belongs to the acetyltransferase family. As to quaternary structure, forms a complex with cognate antitoxin TacA.

Its function is as follows. Probable toxin component of a type II toxin-antitoxin (TA) system. Might acetylate tRNA and inhibit translation. Should be neutralized by cognate antitoxin TacA (y4aR). The sequence is that of Probable toxin TacT from Sinorhizobium fredii (strain NBRC 101917 / NGR234).